A 944-amino-acid polypeptide reads, in one-letter code: Neutral alpha-glucosidase AB (944 aa).

The signal sequence occupies residues 1 to 32 (MAAIAAVAARRRRSWLSLVLAYLGVCLGITLA). Cysteine 41 and cysteine 47 form a disulfide bridge. Serine 52 bears the Phosphoserine mark. Asparagine 97 carries N-linked (GlcNAc...) asparagine glycosylation. Positions 180-238 (HQRAPRVPQESKDPAEGNGAQPEATPGDGDKPEETQEKAEKDEPGAWEETFKTHSDSKP) are disordered. A compositionally biased stretch (basic and acidic residues) spans 207–236 (DGDKPEETQEKAEKDEPGAWEETFKTHSDS). Residues aspartate 283 and aspartate 429 each contribute to the substrate site. Catalysis depends on aspartate 542, which acts as the Nucleophile. Position 602 (arginine 602) interacts with substrate. Residue aspartate 618 is the Proton donor of the active site. Cysteine 633 and cysteine 644 are joined by a disulfide. Histidine 676 serves as a coordination point for substrate.

It belongs to the glycosyl hydrolase 31 family. As to quaternary structure, heterodimer of a catalytic alpha subunit (GANAB) and a beta subunit (PRKCSH). Binds glycosylated PTPRC.

It is found in the endoplasmic reticulum. It localises to the golgi apparatus. The protein resides in the melanosome. It catalyses the reaction N(4)-(alpha-D-Glc-(1-&gt;3)-alpha-D-Man-(1-&gt;2)-alpha-D-Man-(1-&gt;2)-alpha-D-Man-(1-&gt;3)-[alpha-D-Man-(1-&gt;2)-alpha-D-Man-(1-&gt;3)-[alpha-D-Man-(1-&gt;2)-alpha-D-Man-(1-&gt;6)]-alpha-D-Man-(1-&gt;6)]-beta-D-Man-(1-&gt;4)-beta-D-GlcNAc-(1-&gt;4)-beta-D-GlcNAc)-L-asparaginyl-[protein] + H2O = N(4)-(alpha-D-Man-(1-&gt;2)-alpha-D-Man-(1-&gt;2)-alpha-D-Man-(1-&gt;3)-[alpha-D-Man-(1-&gt;2)-alpha-D-Man-(1-&gt;3)-[alpha-D-Man-(1-&gt;2)-alpha-D-Man-(1-&gt;6)]-alpha-D-Man-(1-&gt;6)]-beta-D-Man-(1-&gt;4)-beta-D-GlcNAc-(1-&gt;4)-beta-D-GlcNAc)-L-asparaginyl-[protein] (N-glucan mannose isomer 9A1,2,3B1,2,3) + beta-D-glucose. The enzyme catalyses N(4)-(alpha-D-Glc-(1-&gt;3)-alpha-D-Glc-(1-&gt;3)-alpha-D-Man-(1-&gt;2)-alpha-D-Man-(1-&gt;2)-alpha-D-Man-(1-&gt;3)-[alpha-D-Man-(1-&gt;2)-alpha-D-Man-(1-&gt;3)-[alpha-D-Man-(1-&gt;2)-alpha-D-Man-(1-&gt;6)]-alpha-D-Man-(1-&gt;6)]-beta-D-Man-(1-&gt;4)-beta-D-GlcNAc-(1-&gt;4)-beta-D-GlcNAc)-L-asparaginyl-[protein] + H2O = N(4)-(alpha-D-Glc-(1-&gt;3)-alpha-D-Man-(1-&gt;2)-alpha-D-Man-(1-&gt;2)-alpha-D-Man-(1-&gt;3)-[alpha-D-Man-(1-&gt;2)-alpha-D-Man-(1-&gt;3)-[alpha-D-Man-(1-&gt;2)-alpha-D-Man-(1-&gt;6)]-alpha-D-Man-(1-&gt;6)]-beta-D-Man-(1-&gt;4)-beta-D-GlcNAc-(1-&gt;4)-beta-D-GlcNAc)-L-asparaginyl-[protein] + beta-D-glucose. It participates in glycan metabolism; N-glycan metabolism. Its function is as follows. Catalytic subunit of glucosidase II that cleaves sequentially the 2 innermost alpha-1,3-linked glucose residues from the Glc(2)Man(9)GlcNAc(2) oligosaccharide precursor of immature glycoproteins. Required for PKD1/Polycystin-1 and PKD2/Polycystin-2 maturation and localization to the cell surface and cilia. This chain is Neutral alpha-glucosidase AB, found in Mus musculus (Mouse).